The chain runs to 131 residues: UPF0102 protein YraN (131 aa).

The interval 1-20 (MATVPTRSGSPRQLTTKQTG) is disordered.

Belongs to the UPF0102 family.

This is UPF0102 protein YraN from Escherichia coli O139:H28 (strain E24377A / ETEC).